The sequence spans 446 residues: Cobalamin biosynthesis protein CbiHC (446 aa).

The tract at residues 1–246 (MLLLPSRGKL…MFTPRGYSNK (246 aa)) is cobalt-factor III C(17)-methyltransferase. A cobalt-precorrin-8 methylmutase region spans residues 247 to 446 (YNIGEKRRAE…CLIEHADRPD (200 aa)).

In the N-terminal section; belongs to the precorrin methyltransferase family. The protein in the C-terminal section; belongs to the CobH family.

It carries out the reaction Co(II)-factor III + S-adenosyl-L-methionine + H(+) = Co(II)-factor IV + S-adenosyl-L-homocysteine. The enzyme catalyses Co-precorrin-8X = cob(II)yrinate. Its pathway is cofactor biosynthesis; adenosylcobalamin biosynthesis; cob(II)yrinate a,c-diamide from sirohydrochlorin (anaerobic route): step 3/10. The protein operates within cofactor biosynthesis; adenosylcobalamin biosynthesis; cob(II)yrinate a,c-diamide from sirohydrochlorin (anaerobic route): step 9/10. Functionally, bifunctional enzyme with a methyltransferase domain that catalyzes the ring contraction and methylation of C-17 in cobalt-factor III to form cobalt-factor IV, and an isomerase domain that catalyzes the conversion of cobalt-precorrin-8 to cobyrinate. The protein is Cobalamin biosynthesis protein CbiHC (cbiHC) of Archaeoglobus fulgidus (strain ATCC 49558 / DSM 4304 / JCM 9628 / NBRC 100126 / VC-16).